Here is a 332-residue protein sequence, read N- to C-terminus: Galectin-4 (332 aa).

2 consecutive Galectin domains span residues 19-150 (YHNP…INFI) and 203-332 (FNGR…YVQI). 265 to 271 (WGSEERK) serves as a coordination point for a beta-D-galactoside. Ser-267 bears the Phosphoserine mark.

As to quaternary structure, monomer.

Its function is as follows. Galectin that binds lactose and a related range of sugars. May be involved in the assembly of adherens junctions. The chain is Galectin-4 (LGALS4) from Bos taurus (Bovine).